We begin with the raw amino-acid sequence, 309 residues long: Calponin-2 (309 aa).

S2 bears the N-acetylserine mark. K8 and K25 each carry N6-acetyllysine. In terms of domain architecture, Calponin-homology (CH) spans 28 to 132; that stretch reads PQKEAELRSW…SLLALAGKAK (105 aa). Phosphoserine is present on S138. 3 Calponin-like repeats span residues 166–191, 206–231, and 245–269; these read IGLQ…RHLY, ISLQ…RHIY, and MSLQ…RQIY. A disordered region spans residues 273 to 309; sequence YCPQGPAADGAPAAAGDGPGPGEPSECPPYYQEEAGY. The segment covering 277–288 has biased composition (low complexity); the sequence is GPAADGAPAAAG.

It belongs to the calponin family.

Its function is as follows. Thin filament-associated protein that is implicated in the regulation and modulation of smooth muscle contraction. It is capable of binding to actin, calmodulin and tropomyosin. The interaction of calponin with actin inhibits the actomyosin Mg-ATPase activity. The protein is Calponin-2 (CNN2) of Bos taurus (Bovine).